A 2415-amino-acid chain; its full sequence is Spectrin alpha chain, erythrocytic 1 (2415 aa).

Spectrin repeat units lie at residues 52–152 (YHYQ…SDVL), 157–259 (KFYQ…ESLS), 263–365 (DLQR…AKLK), 370–471 (YHRF…HQYR), 475–576 (DFHL…RKLL), 580–681 (QLLQ…GTQL), 686–787 (QLLQ…KKKL), 792–894 (KLQQ…NDLK), and 898–967 (QLQQ…QQQQ). Serine 257 carries the phosphoserine modification. The 60-residue stretch at 975–1034 (GREARVIALYDFEARSRREVSMKKNDVLTLLSSINKDWWKVEADDHQGFVPAVYVRKLAP) folds into the SH3 domain. At serine 990 the chain carries Phosphoserine. Spectrin repeat units follow at residues 1085–1177 (LAYE…YQLL), 1183–1285 (VEMF…SLNE), 1287–1390 (HKFF…KMLD), 1394–1489 (ELQL…QLLT), 1499–1603 (DLKQ…KLNE), 1606–1709 (RQQR…KLKE), 1712–1815 (ALFQ…NLEE), 1818–1921 (EYLQ…SQLD), 1924–2029 (HAFQ…KLLE), 2040–2142 (LFME…QELQ), and 2154–2254 (MCQE…NLEQ). A Phosphoserine modification is found at serine 1972. 3 EF-hand domains span residues 2267–2302 (ETLK…LNYY), 2310–2345 (EPEP…KESE), and 2347–2382 (IKTS…EQVS). Ca(2+) contacts are provided by aspartate 2280, asparagine 2282, threonine 2284, arginine 2286, glutamate 2291, aspartate 2323, tyrosine 2329, and aspartate 2334.

Belongs to the spectrin family. In terms of assembly, composed of non-homologous chains, alpha and beta, which aggregate to form dimers, tetramers, and higher polymers. Interacts with FASLG. Interacts with BCAM.

It is found in the cytoplasm. The protein localises to the cytoskeleton. Its subcellular location is the cell cortex. Functionally, spectrin is the major constituent of the cytoskeletal network underlying the erythrocyte plasma membrane. It associates with band 4.1 and actin to form the cytoskeletal superstructure of the erythrocyte plasma membrane. This chain is Spectrin alpha chain, erythrocytic 1 (Spta1), found in Mus musculus (Mouse).